Reading from the N-terminus, the 622-residue chain is Palmitoyltransferase ZDHHC17 (622 aa).

At 1–294 (MADGPDEYDT…LKADKEFRQK (294 aa)) the chain is on the cytoplasmic side. The tract at residues 1-295 (MADGPDEYDT…KADKEFRQKV (295 aa)) is necessary and sufficient for interaction with DNAJC5 and SNAP25. ANK repeat units lie at residues 41-76 (THVDDYSTWDIVKATQYGIYERCRELVEAGYDVRQP), 79-108 (ENVTLLHWAAINNRIDLVKYYISKGAIVDQ), 113-142 (LNSTPLHWATRQGHLSMVVQLMKYGADPSL), 146-175 (EGCSCIHLAAQFGHTSIVAYLIAKGQDVDM), 179-209 (NGMTPLMWAAYRTHSVDPTRLLLTFNVSVNL), 214-243 (HKNTALHWAVLAGNTTVISLLLEAGGNVDA), and 247-276 (KGESALDLAKQRKNVWMINHLQEARQAKGY). 2 consecutive transmembrane segments (helical) span residues 295 to 315 (VMLGTPFLVIWLVGFIADLNI) and 316 to 336 (DSWLIKGLMYGGVWATVQFLS). Residues 337–347 (KSFFDHSMHSA) are Lumenal-facing. Residues 348-368 (LPLGIYLATKFWMYVTWFFWF) form a helical membrane-spanning segment. Residues 369–371 (WND) lie on the Cytoplasmic side of the membrane. The chain crosses the membrane as a helical span at residues 372–392 (LSFLSIHLPFLANSVALFYNF). Residues 393–470 (GKSWKSDPGI…GNCVGAGNHR (78 aa)) lie on the Lumenal side of the membrane. Residues 427–477 (IFCSTCLIRKPVRSKHCGVCNRCIAKFDHHCPWVGNCVGAGNHRYFMGYLF) enclose the DHHC domain. The active-site S-palmitoyl cysteine intermediate is Cys457. The helical transmembrane segment at 471 to 491 (YFMGYLFFLLFMICWMIYGCV) threads the bilayer. Residues 492-506 (SYWGLHCETTYTKDG) lie on the Cytoplasmic side of the membrane. Residues 507–526 (FWTYITQIATCSPWMFWMFL) traverse the membrane as a helical segment. Residues 527-529 (NSV) are Lumenal-facing. A helical transmembrane segment spans residues 530–552 (FHFMWVAVLLMCQMYQITCLGIT). At 553–622 (TNERMNARRY…QISGSGYQLV (70 aa)) the chain is on the cytoplasmic side.

The protein belongs to the DHHC palmitoyltransferase family. AKR/ZDHHC17 subfamily. In terms of assembly, interacts (via ANK repeats) with numerous proteins (via the consensus sequence motif [VIAP]-[VIT]-x-x-Q-P). Interacts (via ANK repeats) with CLIP3. Interacts (via ANK repeats) with HTT. Interacts (via ANK repeats) with DNAJC5 (via C-terminus). Interacts (via ANK repeats) with MAP6. Interacts (via ANK repeats) with SNAP23. Interacts (via ANK repeats) with SNAP25. Interacts (via ANK repeats) with EVL. Interacts with SPRED1 and SPRED3. Interacts with GPM6A and OPTN. May interact (via ANK repeats) with SPRED2. May interact with NTRK1; may regulate its localization and function. Autopalmitoylated. Autopalmitoylation has a regulatory role in ZDHHC17-mediated Mg(2+) transport.

Its subcellular location is the golgi apparatus membrane. The protein resides in the cytoplasmic vesicle membrane. The protein localises to the presynaptic cell membrane. It catalyses the reaction L-cysteinyl-[protein] + hexadecanoyl-CoA = S-hexadecanoyl-L-cysteinyl-[protein] + CoA. The enzyme catalyses L-cysteinyl-[protein] + tetradecanoyl-CoA = S-tetradecanoyl-L-cysteinyl-[protein] + CoA. It carries out the reaction L-cysteinyl-[protein] + octadecanoyl-CoA = S-octadecanoyl-L-cysteinyl-[protein] + CoA. Its function is as follows. Palmitoyltransferase that catalyzes the addition of palmitate onto various protein substrates and is involved in a variety of cellular processes. Has no stringent fatty acid selectivity and in addition to palmitate can also transfer onto target proteins myristate from tetradecanoyl-CoA and stearate from octadecanoyl-CoA. Palmitoyltransferase specific for a subset of neuronal proteins, including SNAP25, DLG4/PSD95, GAD2, SYT1 and HTT. Also palmitoylates neuronal protein GPM6A as well as SPRED1 and SPRED3. Could also play a role in axonogenesis through the regulation of NTRK1 and the downstream ERK1/ERK2 signaling cascade. May be involved in the sorting or targeting of critical proteins involved in the initiating events of endocytosis at the plasma membrane. May play a role in Mg(2+) transport. Could also palmitoylate DNAJC5 and regulate its localization to the Golgi membrane. Palmitoylates CASP6, thereby preventing its dimerization and subsequent activation. The protein is Palmitoyltransferase ZDHHC17 of Rattus norvegicus (Rat).